The following is a 490-amino-acid chain: Transcriptional regulator FleQ (490 aa).

Leu-142 is a binding site for 3',3'-c-di-GMP. ADP is bound by residues Val-147 and Gly-177 to Val-182. Residues Asn-186–Tyr-189 and Glu-330–Gly-341 contribute to the 3',3'-c-di-GMP site. The ADP site is built by Arg-334 and Arg-363.

In terms of assembly, forms homodimers. Forms homohexamers that inhibit transcription initiation. Interacts with FleN; this complex is formed in the presence as well as in the absence of c-di-GMP or ATP.

C-di-GMP interaction leads to active site obstruction, hexameric ring destabilization thus relieving DNA bending and activating gene transcription. Its function is as follows. AAA+ ATPase enhancer-binding protein that acts as a transcription regulator and plays a role in the modulation of mucin adhesion and flagellar gene expression. In addition to flagella genes, also regulates expression of biofilm-related genes. Functions as a transcriptional repressor in the absence of c-di-GMP and as an activator when c-di-GMP is present. The chain is Transcriptional regulator FleQ from Pseudomonas aeruginosa (strain ATCC 15692 / DSM 22644 / CIP 104116 / JCM 14847 / LMG 12228 / 1C / PRS 101 / PAO1).